The primary structure comprises 343 residues: GTPase Obg (343 aa).

One can recognise an Obg domain in the interval 1-157 (MKFIDEVSIS…IEVRLELKLI (157 aa)). The segment at 13 to 44 (SGRGGPGCVSFRRESMQARGGPDGGNGGKGGD) is disordered. The span at 33–43 (GPDGGNGGKGG) shows a compositional bias: gly residues. The 181-residue stretch at 158–338 (ADVGIVGFPN…FVQELARQIL (181 aa)) folds into the OBG-type G domain. Residues 164 to 171 (GFPNAGKS), 189 to 193 (FTTLT), 211 to 214 (DIPG), 290 to 293 (NKID), and 319 to 321 (SAV) each bind GTP. Mg(2+)-binding residues include Ser-171 and Thr-191.

Belongs to the TRAFAC class OBG-HflX-like GTPase superfamily. OBG GTPase family. As to quaternary structure, monomer. Requires Mg(2+) as cofactor.

The protein localises to the cytoplasm. An essential GTPase which binds GTP, GDP and possibly (p)ppGpp with moderate affinity, with high nucleotide exchange rates and a fairly low GTP hydrolysis rate. Plays a role in control of the cell cycle, stress response, ribosome biogenesis and in those bacteria that undergo differentiation, in morphogenesis control. The polypeptide is GTPase Obg (Bdellovibrio bacteriovorus (strain ATCC 15356 / DSM 50701 / NCIMB 9529 / HD100)).